Here is a 322-residue protein sequence, read N- to C-terminus: Gluconeogenesis factor (322 aa).

Belongs to the gluconeogenesis factor family.

It is found in the cytoplasm. In terms of biological role, required for morphogenesis under gluconeogenic growth conditions. The chain is Gluconeogenesis factor from Listeria monocytogenes serovar 1/2a (strain ATCC BAA-679 / EGD-e).